The sequence spans 72 residues: UPF0346 protein GK1571 (72 aa).

This sequence belongs to the UPF0346 family.

This chain is UPF0346 protein GK1571, found in Geobacillus kaustophilus (strain HTA426).